A 237-amino-acid polypeptide reads, in one-letter code: Cysteine-rich venom protein DIS1 (237 aa).

Residues 1 to 18 (MFVFILLSLAAVLQQSFG) form the signal peptide. The region spanning 37–165 (VDKHNAFRRS…SYNYFYVCQY (129 aa)) is the SCP domain. Cystine bridges form between C74–C152, C91–C166, C147–C163, C185–C192, C188–C197, C201–C234, and C219–C232. Residues 201–234 (CSREDVFMNCKSLVAQSNCQDDYIRKNCPATCFC) enclose the ShKT domain.

The protein belongs to the CRISP family. Expressed by the venom gland.

Its subcellular location is the secreted. Functionally, weakly blocks contraction of smooth muscle elicited by high potassium-induced depolarization, but does not block caffeine-stimulated contraction. May target voltage-gated calcium channels on smooth muscle. The sequence is that of Cysteine-rich venom protein DIS1 from Dispholidus typus (Boomslang).